Reading from the N-terminus, the 231-residue chain is Ureidoacrylate amidohydrolase RutB (231 aa).

Residue Asp25 is the Proton acceptor of the active site. Lys134 is an active-site residue. The active-site Nucleophile is the Cys167.

This sequence belongs to the isochorismatase family. RutB subfamily.

The catalysed reaction is (Z)-3-ureidoacrylate + H2O + H(+) = (Z)-3-aminoacrylate + NH4(+) + CO2. It carries out the reaction (Z)-3-ureidoacrylate + H2O = (Z)-3-aminoacrylate + carbamate + H(+). The enzyme catalyses (Z)-2-methylureidoacrylate + H2O + H(+) = (Z)-2-methylaminoacrylate + NH4(+) + CO2. Hydrolyzes ureidoacrylate to form aminoacrylate and carbamate. The carbamate hydrolyzes spontaneously, thereby releasing one of the nitrogen atoms of the pyrimidine ring as ammonia and one of its carbon atoms as CO2. The sequence is that of Ureidoacrylate amidohydrolase RutB from Escherichia coli (strain SMS-3-5 / SECEC).